The sequence spans 102 residues: Turripeptide OL55-like (102 aa).

Contains 8 disulfide bonds. Expressed by the venom duct.

It is found in the secreted. Functionally, acts as a neurotoxin by inhibiting an ion channel. The chain is Turripeptide OL55-like from Lophiotoma acuta (Marbled turris).